The primary structure comprises 454 residues: Mediator of RNA polymerase II transcription subunit 1 (454 aa).

This sequence belongs to the Mediator complex subunit 1 family. In terms of assembly, component of the Mediator complex.

It is found in the nucleus. Functionally, component of the Mediator complex, a coactivator involved in the regulated transcription of nearly all RNA polymerase II-dependent genes. Mediator functions as a bridge to convey information from gene-specific regulatory proteins to the basal RNA polymerase II transcription machinery. Mediator is recruited to promoters by direct interactions with regulatory proteins and serves as a scaffold for the assembly of a functional preinitiation complex with RNA polymerase II and the general transcription factors. The polypeptide is Mediator of RNA polymerase II transcription subunit 1 (med1) (Schizosaccharomyces pombe (strain 972 / ATCC 24843) (Fission yeast)).